We begin with the raw amino-acid sequence, 468 residues long: FAD-linked oxidoreductase azaG (468 aa).

The first 16 residues, 1-16, serve as a signal peptide directing secretion; that stretch reads MQLSGILSWLLSWLWA. N-linked (GlcNAc...) asparagine glycosylation occurs at Asn-44. The FAD-binding PCMH-type domain maps to 54-228; that stretch reads TVHGAPHYLG…TSATYRTHQA (175 aa). N-linked (GlcNAc...) asparagine glycosylation is found at Asn-272, Asn-348, and Asn-464.

Belongs to the oxygen-dependent FAD-linked oxidoreductase family. Requires FAD as cofactor.

Its pathway is secondary metabolite biosynthesis. FAD-linked oxidoreductase; part of the gene cluster that mediates the biosynthesis of azaphilones, a class of fungal metabolites characterized by a highly oxygenated pyrano-quinone bicyclic core and exhibiting a broad range of bioactivities. In the first step, the non-reducing polyketide synthase azaA forms the hexaketide precursor from successive condensations of five malonyl-CoA units, presumably with a simple acetyl-CoA starter unit. The reactive polyketide chain then undergoes a PT-mediated C2-C7 cyclization to afford the aromatic ring and is eventually released as an aldehyde through the R-domain. The putative ketoreductase azaE is proposed to catalyze the reduction of the terminal ketone resulting in the early culture product FK17-P2a. The monooxygenase azaH was demonstrated to be the only enzyme required to convert FK17-P2a to azanigerone E. AzaH first hydroxylates the benzaldehyde intermediate FK17-P2a at C4, which triggers the formation of the pyran-ring to afford azanigerone E. In parallel, the 2,4-dimethylhexanoyl chain is synthesized by the HR-PKS azaB and is proposed to be transferred to the C4-hydroxyl of azanigerone E by the acyltransferase azaD directly from the ACP domain of azaB. Alternatively, the 2,4-dimethyl-hexanoyl chain may be offloaded from the HR-PKS as a carboxylic acid and converted to an acyl-CoA by azaF. The resulting acyl-CoA molecule could then be taken up as a substrate by AzaD to form azanigerone B. To yield the carboxylic acid substituent in azanigerone A, the hydroxypropyl side chain of azanigerone B would need to undergo a C-C oxidative cleavage catalyzed by cytochrome P450 AzaI. AzaI is proposed to act on a vicinal diol that leads to a C-C bond scission either through an alkoxyradical intermediate or a peroxy complex. In the biosynthesis of azanigerone A, azanigerone B first undergoes hydroxylation at C10, possibly catalyzed by one of the two FAD-dependent monooxygenases encoded in the cluster, azaG or azaL, resulting in the vicinal diol azanigerone C. Oxidative cleavage of azanigerone C by azaI would yield the corresponding aldehyde derivative of azanigerone A. Finally, the dehydrogenase azaJ is proposed to convert the aldehyde functional group into the carboxylic acid, completing the conversion from azanigerone B to azanigerone A. Alternatively, the oxidation of aldehyde to carboxylic acid may be catalyzed by the same P450 enzyme azaI via consecutive oxidation or by endogenous alcohol dehydrogenase. In Aspergillus niger (strain ATCC 1015 / CBS 113.46 / FGSC A1144 / LSHB Ac4 / NCTC 3858a / NRRL 328 / USDA 3528.7), this protein is FAD-linked oxidoreductase azaG.